A 296-amino-acid chain; its full sequence is Pantothenate synthetase (296 aa).

37 to 44 (MGALHTGH) contributes to the ATP binding site. Catalysis depends on H44, which acts as the Proton donor. Q68 serves as a coordination point for (R)-pantoate. Q68 lines the beta-alanine pocket. 160 to 163 (GQKD) is a binding site for ATP. Q166 is a binding site for (R)-pantoate. ATP is bound by residues V189 and 197-200 (TSSR).

The protein belongs to the pantothenate synthetase family. Homodimer.

It is found in the cytoplasm. It carries out the reaction (R)-pantoate + beta-alanine + ATP = (R)-pantothenate + AMP + diphosphate + H(+). It participates in cofactor biosynthesis; (R)-pantothenate biosynthesis; (R)-pantothenate from (R)-pantoate and beta-alanine: step 1/1. Functionally, catalyzes the condensation of pantoate with beta-alanine in an ATP-dependent reaction via a pantoyl-adenylate intermediate. The sequence is that of Pantothenate synthetase from Thermobifida fusca (strain YX).